A 290-amino-acid chain; its full sequence is Large ribosomal subunit protein uL2m (290 aa).

The protein belongs to the universal ribosomal protein uL2 family. In terms of assembly, probably part of the large ribosomal subunit.

It localises to the hydrogenosome. The chain is Large ribosomal subunit protein uL2m (rpl2) from Nyctotherus ovalis.